The chain runs to 1107 residues: Copine family protein 1 (1107 aa).

Residues 1–22 (MVFDARLGYDPDEWEECPEPEH) lie on the Extracellular side of the membrane. The chain crosses the membrane as a helical span at residues 23–45 (FLVFSGFTRYMLTFAAIAFVYYF). Residues 46 to 1107 (FKLLDDKNKK…IRREMMHNPL (1062 aa)) are Cytoplasmic-facing. Residues 67-124 (VESVLAKAGDKLHDVKEQVQQHIPESAEELMREADQYLKEQAHSVQNNVHQFAEQAAN) are a coiled coil. Low complexity predominate over residues 478 to 488 (QLQQNQQQHQQ). Disordered stretches follow at residues 478-501 (QLQQ…TADS) and 673-698 (HEPE…SRQV). The segment covering 492-501 (IDRRRTTADS) has biased composition (basic and acidic residues). The span at 687–698 (KNPSFEATSRQV) shows a compositional bias: polar residues. The VWFA domain maps to 863–1023 (NLIFGIDYTA…LSIIVVGVGD (161 aa)).

The protein belongs to the copine family. In terms of assembly, may interact (via VWFA domain) with unc-89 (via Ig-like C2-type 1-3) and unc-96 (via C-terminus); cpna-1 binding sites for unc-89 and unc-96 are different. May interact with pat-6. May interact with lim-9 (via LIM domains) and with scpl-1 (via FCP1 homology domain). As to expression, expressed in body wall muscles (at protein level).

It is found in the basal cell membrane. It localises to the cytoplasm. Its subcellular location is the myofibril. The protein resides in the sarcomere. The protein localises to the m line. Its function is as follows. Involved in the assembly of dense bodies and M lines during body wall muscle development. Acts by recruiting downstream of integrin-associated protein pat-6/actopaxin several dense bodies and M line components including unc-89, lim-9, scpl-1 and unc-96 to integrin-mediated attachment sites. In Caenorhabditis elegans, this protein is Copine family protein 1.